The primary structure comprises 353 residues: 3-isopropylmalate dehydrogenase (353 aa).

Substrate is bound by residues arginine 97, arginine 107, arginine 135, and aspartate 219. Residues aspartate 219, aspartate 243, and aspartate 247 each coordinate Mg(2+).

The protein belongs to the isocitrate and isopropylmalate dehydrogenases family. LeuB type 1 subfamily. In terms of assembly, homodimer. It depends on Mg(2+) as a cofactor. The cofactor is Mn(2+).

It is found in the cytoplasm. The catalysed reaction is (2R,3S)-3-isopropylmalate + NAD(+) = 4-methyl-2-oxopentanoate + CO2 + NADH. It functions in the pathway amino-acid biosynthesis; L-leucine biosynthesis; L-leucine from 3-methyl-2-oxobutanoate: step 3/4. In terms of biological role, catalyzes the oxidation of 3-carboxy-2-hydroxy-4-methylpentanoate (3-isopropylmalate) to 3-carboxy-4-methyl-2-oxopentanoate. The product decarboxylates to 4-methyl-2 oxopentanoate. This chain is 3-isopropylmalate dehydrogenase, found in Bacteroides fragilis (strain ATCC 25285 / DSM 2151 / CCUG 4856 / JCM 11019 / LMG 10263 / NCTC 9343 / Onslow / VPI 2553 / EN-2).